We begin with the raw amino-acid sequence, 558 residues long: Atlastin-1 (558 aa).

The interval 1 to 29 (MAKSRRDRNSWGGFSEKSSDWSSEEEEPV) is disordered. The segment at 1-34 (MAKSRRDRNSWGGFSEKSSDWSSEEEEPVRKAGP) is N-terminal hypervariable region (HVR). At 1–449 (MAKSRRDRNS…NIFHAARTPA (449 aa)) the chain is on the cytoplasmic side. Residues S10, S22, and S23 each carry the phosphoserine modification. The GB1/RHD3-type G domain maps to 64–309 (DKEVVAVSVA…LIPWLLSPES (246 aa)). 11 residues coordinate GDP: R77, K78, G79, K80, S81, F82, Q148, R217, D218, V276, and N279. GTP contacts are provided by R77, K78, G79, K80, S81, and F82. S81 is a Mg(2+) binding site. GTP-binding residues include R217, D218, and V276. The tract at residues 347–438 (MLQATAEANN…YIQYIKHNDS (92 aa)) is 3HB (three-helix bundle) domain. The residue at position 395 (K395) is an N6-acetyllysine. Residues 412–439 (EFSRRYLQQLESEIDELYIQYIKHNDSK) are a coiled coil. Positions 439–447 (KNIFHAART) are linker. A helical transmembrane segment spans residues 450–470 (TLFVVIFITYVIAGVTGFIGL). Position 471 (D471) is a topological domain, lumenal. A helical transmembrane segment spans residues 472-492 (IIASLCNMIMGLTLITLCTWA). Residues 493 to 558 (YIRYSGEYRE…PTEQPEKKKI (66 aa)) lie on the Cytoplasmic side of the membrane. Positions 521–558 (NEALYKLYSAAATHRHLYQQAFPAPKSEPTEQPEKKKI) are autoinhibitory domain.

This sequence belongs to the TRAFAC class dynamin-like GTPase superfamily. GB1/RHD3 GTPase family. GB1 subfamily. In terms of assembly, monomeric and homodimeric. The homodimer, transiently formed by two molecules on opposing membranes, is the active form mediating ER membrane fusion. Interacts with REEP1, REEP5, RTN3 and RTN4 (via the transmembrane region); these proteins are involved in endoplasmic reticulum tubular network organization. Interacts with ZFYVE27; both proteins are involved in endoplasmic reticulum tubular network organization. Interacts with ARL6IP1; both proteins are involved in endoplasmic reticulum tubular network organization. Interacts with SPAST; the interaction is direct, could recruit SPAST to Golgi membranes. Interacts (via N-terminal region) with MAP4K4 (via CNH regulatory domain). May interact with TMED2. Interacts with CPT1C. In terms of processing, phosphorylated. Phosphorylation, by different kinases, of the N-terminal hypervariable region (HVR) regulates the ATL1-mediated membrane tethering step. Detected in brain where it is abundant in lamina V of the cerebral cortex. Also expressed within the hippocampus, mainly in pyramidal neurons in CA1 and CA3. Weakly expressed in the striatum and more robustly in amygdala and several thalamic nuclei. Also detected in several mesopontine nuclei (at protein level).

It is found in the endoplasmic reticulum membrane. The protein localises to the golgi apparatus membrane. It localises to the cell projection. Its subcellular location is the axon. The catalysed reaction is GTP + H2O = GDP + phosphate + H(+). Functionally, atlastin-1 (ATL1) is a membrane-anchored GTPase that mediates the GTP-dependent fusion of endoplasmic reticulum (ER) membranes, maintaining the continuous ER network. It facilitates the formation of three-way junctions where ER tubules intersect. Two atlastin-1 on neighboring ER tubules bind GTP and form loose homodimers through the GB1/RHD3-type G domains and 3HB regions. Upon GTP hydrolysis, the 3HB regions tighten, pulling the membranes together to drive their fusion. After fusion, the homodimer disassembles upon release of inorganic phosphate (Pi). Subsequently, GDP dissociates, resetting the monomers to a conformation ready for a new fusion cycle. May also regulate more or less directly Golgi biogenesis. Indirectly regulates axonal development. The protein is Atlastin-1 of Rattus norvegicus (Rat).